The chain runs to 338 residues: Uroporphyrinogen decarboxylase (338 aa).

Substrate is bound by residues R21–R25, D71, Y146, S201, and H316.

Belongs to the uroporphyrinogen decarboxylase family. In terms of assembly, homodimer.

It localises to the cytoplasm. The catalysed reaction is uroporphyrinogen III + 4 H(+) = coproporphyrinogen III + 4 CO2. Its pathway is porphyrin-containing compound metabolism; protoporphyrin-IX biosynthesis; coproporphyrinogen-III from 5-aminolevulinate: step 4/4. Catalyzes the decarboxylation of four acetate groups of uroporphyrinogen-III to yield coproporphyrinogen-III. This Rickettsia akari (strain Hartford) protein is Uroporphyrinogen decarboxylase.